The sequence spans 408 residues: Exodeoxyribonuclease 7 large subunit (408 aa).

It belongs to the XseA family. As to quaternary structure, heterooligomer composed of large and small subunits.

It localises to the cytoplasm. It catalyses the reaction Exonucleolytic cleavage in either 5'- to 3'- or 3'- to 5'-direction to yield nucleoside 5'-phosphates.. Bidirectionally degrades single-stranded DNA into large acid-insoluble oligonucleotides, which are then degraded further into small acid-soluble oligonucleotides. The protein is Exodeoxyribonuclease 7 large subunit of Alkaliphilus oremlandii (strain OhILAs) (Clostridium oremlandii (strain OhILAs)).